We begin with the raw amino-acid sequence, 980 residues long: Envelope glycoprotein B (980 aa).

Positions 1 to 14 (MSSGCRSVGGSTWG) are enriched in polar residues. Disordered regions lie at residues 1–20 (MSSGCRSVGGSTWGNWRGDG) and 88–118 (TTPSPPTSTPTSMSTHSHGTVDPTLLPTETP). The N-terminal stretch at 1-86 (MSSGCRSVGG…LFGSCVVRAV (86 aa)) is a signal peptide. The Virion surface portion of the chain corresponds to 87–849 (PTTPSPPTST…SGIASFLNNP (763 aa)). Residues 96-118 (TPTSMSTHSHGTVDPTLLPTETP) are compositionally biased toward low complexity. 5 disulfide bridges follow: Cys-140–Cys-647, Cys-157–Cys-603, Cys-231–Cys-296, Cys-389–Cys-437, and Cys-668–Cys-708. An N-linked (GlcNAc...) asparagine; by host glycan is attached at Asn-165. Residues 197-203 (VWKGYSH) form an involved in fusion and/or binding to host membrane region. Asn-275 carries N-linked (GlcNAc...) asparagine; by host glycosylation. The interval 282 to 290 (GWMPWRHYT) is involved in fusion and/or binding to host membrane. 6 N-linked (GlcNAc...) asparagine; by host glycosylation sites follow: Asn-380, Asn-423, Asn-497, Asn-514, Asn-515, and Asn-560. Over residues 505 to 516 (LLNPNANNNNNT) the composition is skewed to low complexity. The tract at residues 505-535 (LLNPNANNNNNTTRRRRSLLSVPEPQPTQDG) is disordered. 2 N-linked (GlcNAc...) asparagine; by host glycosylation sites follow: Asn-727 and Asn-749. Hydrophobic membrane proximal region regions lie at residues 794-847 (IDSV…SFLN) and 823-843 (AVGTLVLGAAGAVVSTVSGIA). Residues 850–870 (FGGLAIGLLVIAGLVAAFFAY) form a helical membrane-spanning segment. Residues 871–980 (RYVMQIRSNP…NDTMENEKMV (110 aa)) are Intravirion-facing. Positions 925-928 (YMSM) match the Golgi targeting motif. The short motif at 965-968 (YTRL) is the Internalization motif element.

The protein belongs to the herpesviridae glycoprotein B family. As to quaternary structure, homotrimer; disulfide-linked. Binds to heparan sulfate proteoglycans. Interacts with gH/gL heterodimer. Post-translationally, a proteolytic cleavage by host furin generates two subunits that remain linked by disulfide bonds.

The protein localises to the virion membrane. It is found in the host cell membrane. It localises to the host endosome membrane. The protein resides in the host Golgi apparatus membrane. In terms of biological role, envelope glycoprotein that forms spikes at the surface of virion envelope. Essential for the initial attachment to heparan sulfate moieties of the host cell surface proteoglycans. Involved in fusion of viral and cellular membranes leading to virus entry into the host cell. Following initial binding to its host receptors, membrane fusion is mediated by the fusion machinery composed at least of gB and the heterodimer gH/gL. May be involved in the fusion between the virion envelope and the outer nuclear membrane during virion egress. This is Envelope glycoprotein B from Equus caballus (Horse).